The sequence spans 215 residues: Small ribosomal subunit protein uS3 (215 aa).

The 69-residue stretch at 39–107 (VRQYLQKRLA…PVHINIEEIR (69 aa)) folds into the KH type-2 domain.

Belongs to the universal ribosomal protein uS3 family. As to quaternary structure, part of the 30S ribosomal subunit. Forms a tight complex with proteins S10 and S14.

In terms of biological role, binds the lower part of the 30S subunit head. Binds mRNA in the 70S ribosome, positioning it for translation. This Nitrosomonas eutropha (strain DSM 101675 / C91 / Nm57) protein is Small ribosomal subunit protein uS3.